A 94-amino-acid chain; its full sequence is Co-chaperonin GroES (94 aa).

The protein belongs to the GroES chaperonin family. In terms of assembly, heptamer of 7 subunits arranged in a ring. Interacts with the chaperonin GroEL.

It localises to the cytoplasm. Together with the chaperonin GroEL, plays an essential role in assisting protein folding. The GroEL-GroES system forms a nano-cage that allows encapsulation of the non-native substrate proteins and provides a physical environment optimized to promote and accelerate protein folding. GroES binds to the apical surface of the GroEL ring, thereby capping the opening of the GroEL channel. This is Co-chaperonin GroES from Clostridium botulinum (strain Eklund 17B / Type B).